We begin with the raw amino-acid sequence, 341 residues long: CRISPR-associated endonuclease Cas1 (341 aa).

The Mn(2+) site is built by Glu-173, His-242, and Glu-257.

It belongs to the CRISPR-associated endonuclease Cas1 family. In terms of assembly, homodimer, forms a heterotetramer with a Cas2 homodimer. It depends on Mg(2+) as a cofactor. Mn(2+) serves as cofactor.

CRISPR (clustered regularly interspaced short palindromic repeat), is an adaptive immune system that provides protection against mobile genetic elements (viruses, transposable elements and conjugative plasmids). CRISPR clusters contain spacers, sequences complementary to antecedent mobile elements, and target invading nucleic acids. CRISPR clusters are transcribed and processed into CRISPR RNA (crRNA). Acts as a dsDNA endonuclease. Involved in the integration of spacer DNA into the CRISPR cassette. The sequence is that of CRISPR-associated endonuclease Cas1 from Korarchaeum cryptofilum (strain OPF8).